The primary structure comprises 246 residues: Carboxy-S-adenosyl-L-methionine synthase (246 aa).

S-adenosyl-L-methionine contacts are provided by residues Tyr-39, 64–66, 89–90, 117–118, Asn-132, and Arg-199; these read GCS, DN, and DI.

Belongs to the class I-like SAM-binding methyltransferase superfamily. Cx-SAM synthase family. As to quaternary structure, homodimer.

The enzyme catalyses prephenate + S-adenosyl-L-methionine = carboxy-S-adenosyl-L-methionine + 3-phenylpyruvate + H2O. Catalyzes the conversion of S-adenosyl-L-methionine (SAM) to carboxy-S-adenosyl-L-methionine (Cx-SAM). This is Carboxy-S-adenosyl-L-methionine synthase from Enterobacter sp. (strain 638).